Reading from the N-terminus, the 198-residue chain is dTTP/UTP pyrophosphatase (198 aa).

The active-site Proton acceptor is the aspartate 75.

This sequence belongs to the Maf family. YhdE subfamily. It depends on a divalent metal cation as a cofactor.

It localises to the cytoplasm. It carries out the reaction dTTP + H2O = dTMP + diphosphate + H(+). The enzyme catalyses UTP + H2O = UMP + diphosphate + H(+). Nucleoside triphosphate pyrophosphatase that hydrolyzes dTTP and UTP. May have a dual role in cell division arrest and in preventing the incorporation of modified nucleotides into cellular nucleic acids. This Wolbachia pipientis wMel protein is dTTP/UTP pyrophosphatase.